The following is a 301-amino-acid chain: uncharacterized protein (301 aa).

This sequence belongs to the asfivirus E301R family. In terms of assembly, interacts with host IRF3.

In terms of biological role, plays a role in the inhibition of host innate immune system by acting as a negatively regulator of type I interferon production. Mechanistically, interacts with and prevents host IRF3 nuclear localization to inhibit its transcriptional activity. This is an uncharacterized protein from African swine fever virus (isolate Warthog/Namibia/Wart80/1980) (ASFV).